A 124-amino-acid chain; its full sequence is Fluoride-specific ion channel FluC (124 aa).

4 consecutive transmembrane segments (helical) span residues 4–24, 32–52, 67–87, and 101–121; these read VLYI…LSGW, AFPY…GLIM, IGLT…SYET, and ANVL…IIVA. Positions 75 and 78 each coordinate Na(+).

This sequence belongs to the fluoride channel Fluc/FEX (TC 1.A.43) family.

The protein localises to the cell inner membrane. It carries out the reaction fluoride(in) = fluoride(out). With respect to regulation, na(+) is not transported, but it plays an essential structural role and its presence is essential for fluoride channel function. Fluoride-specific ion channel. Important for reducing fluoride concentration in the cell, thus reducing its toxicity. The polypeptide is Fluoride-specific ion channel FluC (Geotalea uraniireducens (strain Rf4) (Geobacter uraniireducens)).